The chain runs to 567 residues: Hexose transporter HXT15 (567 aa).

The segment covering Met-1 to Ala-19 has biased composition (polar residues). The interval Met-1 to Trp-32 is disordered. The Cytoplasmic portion of the chain corresponds to Met-1 to Leu-55. A helical membrane pass occupies residues Gly-56–Trp-76. Topologically, residues Asp-77–Gly-112 are extracellular. A helical transmembrane segment spans residues Leu-113 to Ala-133. Residues Asp-134 to Arg-139 lie on the Cytoplasmic side of the membrane. The chain crosses the membrane as a helical span at residues Leu-140–Asn-160. Residues His-161–Lys-170 are Extracellular-facing. A helical membrane pass occupies residues Ile-171–Ile-191. Topologically, residues Ala-192–Arg-197 are cytoplasmic. Residues Gly-198–Ser-218 form a helical membrane-spanning segment. Residues Val-219–Arg-232 lie on the Extracellular side of the membrane. Residues Ile-233–Pro-253 form a helical membrane-spanning segment. The Cytoplasmic segment spans residues Glu-254–Glu-336. Residues Asn-337–Thr-353 traverse the membrane as a helical segment. Over Asp-354–Ser-359 the chain is Extracellular. A helical transmembrane segment spans residues Ile-360–Val-377. Residues Asp-378 to Lys-384 lie on the Cytoplasmic side of the membrane. Residues Cys-385–Val-405 form a helical membrane-spanning segment. Over Lys-406 to Val-427 the chain is Extracellular. A helical membrane pass occupies residues Phe-428 to Val-448. Residues Ala-449–Thr-465 are Cytoplasmic-facing. A helical membrane pass occupies residues Ala-466 to Ile-486. Position 487 (His-487) is a topological domain, extracellular. A helical transmembrane segment spans residues Phe-488–Phe-508. The Cytoplasmic portion of the chain corresponds to Leu-509–Asn-567. Residues Ser-533–Ser-555 are disordered. The span at Ser-545 to Ser-555 shows a compositional bias: basic and acidic residues.

The protein belongs to the major facilitator superfamily. Sugar transporter (TC 2.A.1.1) family.

Its subcellular location is the membrane. Functionally, probable glucose transporter. The protein is Hexose transporter HXT15 (HXT15) of Saccharomyces cerevisiae (strain ATCC 204508 / S288c) (Baker's yeast).